We begin with the raw amino-acid sequence, 972 residues long: DNA topoisomerase 1 (972 aa).

Disordered stretches follow at residues 1 to 210 (MSGD…VFVK) and 300 to 416 (HEQS…RQKA). Residues 11–31 (IHIQNGGSCEVVQSNGVTTNG) show a composition bias toward polar residues. Residues 32 to 50 (HGHHHHHHSSSSSSSKHKS) are compositionally biased toward basic residues. 3 stretches are compositionally biased toward basic and acidic residues: residues 51–65 (SSKD…EHKS), 72–86 (SKEH…DRHK), and 93–103 (KHRDKDKERDG). The segment covering 104–114 (SSNSHRSGSSS) has biased composition (low complexity). Basic residues predominate over residues 125–138 (SKHKSSSGHHKRSS). Positions 139 to 151 (KDKERRDKDKDRG) are enriched in basic and acidic residues. Residues 173–183 (SHKSSSSSSSS) are compositionally biased toward low complexity. Ser-303 carries the phosphoserine modification. Phosphotyrosine is present on Tyr-304. Positions 316 to 330 (HDDDADEMNDDEEDV) are enriched in acidic residues. Interaction with DNA stretches follow at residues 648–649 (KY), 711–716 (RAGNEK), and 807–809 (TAK). Positions 655-972 (SSKLKGEKDH…VHMADENYRF (318 aa)) constitute a Topo IB-type catalytic domain. Tyr-930 (O-(3'-phospho-DNA)-tyrosine intermediate) is an active-site residue.

The protein belongs to the type IB topoisomerase family. In terms of assembly, interacts with Topors.

Its subcellular location is the nucleus. The protein resides in the cytoplasm. The enzyme catalyses ATP-independent breakage of single-stranded DNA, followed by passage and rejoining.. Its function is as follows. Releases the supercoiling and torsional tension of DNA introduced during the DNA replication and transcription by transiently cleaving and rejoining one strand of the DNA duplex. Introduces a single-strand break via transesterification at a target site in duplex DNA. The scissile phosphodiester is attacked by the catalytic tyrosine of the enzyme, resulting in the formation of a DNA-(3'-phosphotyrosyl)-enzyme intermediate and the expulsion of a 5'-OH DNA strand. The free DNA strand then undergoes passage around the unbroken strand thus removing DNA supercoils. Finally, in the religation step, the DNA 5'-OH attacks the covalent intermediate to expel the active-site tyrosine and restore the DNA phosphodiester backbone. The polypeptide is DNA topoisomerase 1 (Drosophila melanogaster (Fruit fly)).